The primary structure comprises 439 residues: ATP-dependent DNA helicase dda (439 aa).

ATP is bound at residue 32–39 (GPAGTGKT).

Monomer. Interacts with UvsX and gene 32 protein.

The catalysed reaction is Couples ATP hydrolysis with the unwinding of duplex DNA at the replication fork by translocating in the 5'-3' direction. This creates two antiparallel DNA single strands (ssDNA). The leading ssDNA polymer is the template for DNA polymerase III holoenzyme which synthesizes a continuous strand.. The enzyme catalyses ATP + H2O = ADP + phosphate + H(+). In terms of biological role, DNA helicase that stimulates viral DNA replication and recombination. Plays a role in T4 DNA replication initiation by selecting and activating DNA origins. Acts by dissociating and reassociating with the DNA molecule being unwound. Unwinds DNA as a monomer in a 5'-3' direction at a rate of 250 bp/s and can efficiently displace proteins from the DNA. The polypeptide is ATP-dependent DNA helicase dda (dda) (Enterobacteria phage T4 (Bacteriophage T4)).